Consider the following 220-residue polypeptide: Iron-sulfur cluster repair protein YtfE (220 aa).

This sequence belongs to the RIC family. YtfE subfamily. Homodimer.

The protein localises to the cytoplasm. Its function is as follows. Di-iron-containing protein involved in the repair of iron-sulfur clusters damaged by oxidative and nitrosative stress conditions. The sequence is that of Iron-sulfur cluster repair protein YtfE from Salmonella schwarzengrund (strain CVM19633).